A 195-amino-acid polypeptide reads, in one-letter code: Insertion element IS136 uncharacterized protein Atu4601 (195 aa).

Positions 25-194 (MVMRSNLRWC…SPRQFIRAKS (170 aa)) constitute an Integrase catalytic domain.

The protein is Insertion element IS136 uncharacterized protein Atu4601 of Agrobacterium fabrum (strain C58 / ATCC 33970) (Agrobacterium tumefaciens (strain C58)).